The following is a 101-amino-acid chain: Small ribosomal subunit protein uS14 (101 aa).

Residues 1 to 10 (MAKKSSIEKN) are compositionally biased toward basic and acidic residues. The segment at 1–23 (MAKKSSIEKNNRRRKMTKNAAPK) is disordered. Basic residues predominate over residues 11-23 (NRRRKMTKNAAPK).

The protein belongs to the universal ribosomal protein uS14 family. Part of the 30S ribosomal subunit. Contacts proteins S3 and S10.

In terms of biological role, binds 16S rRNA, required for the assembly of 30S particles and may also be responsible for determining the conformation of the 16S rRNA at the A site. This is Small ribosomal subunit protein uS14 from Rhodopseudomonas palustris (strain BisB5).